The chain runs to 479 residues: Serralysin C (479 aa).

Positions 1 to 17 (MGKNLSLRQDDAQHALS) are excised as a propeptide. Position 188 (H188) interacts with Zn(2+). E189 is a catalytic residue. The Zn(2+) site is built by H192 and Y228. R265, G267, D297, G299, G300, D302, T339, E341, G346, G348, D350, N355, A357, N359, G363, G364, A365, G366, D368, G372, G373, G375, D377, G381, G382, A383, G384, D386, D395, D402, and D412 together coordinate Ca(2+). Hemolysin-type calcium-binding repeat units lie at residues 344–361 (IGGS…DNIL), 362–379 (QGGA…ADTL), and 380–397 (YGGA…QDST).

It belongs to the peptidase M10B family. Ca(2+) serves as cofactor. It depends on Zn(2+) as a cofactor.

Its subcellular location is the secreted. It catalyses the reaction Preferential cleavage of bonds with hydrophobic residues in P1'.. The chain is Serralysin C (prtC) from Dickeya chrysanthemi (Pectobacterium chrysanthemi).